The sequence spans 413 residues: Hemolin (413 aa).

The N-terminal stretch at 1-19 (MAFKSIAVLSACIIVGSAL) is a signal peptide. Ig-like C2-type domains are found at residues 25–112 (PVLK…RVIS), 122–211 (PAKT…EEVV), 233–322 (PQYV…LKLT), and 327–413 (PKYE…VQVN). 4 cysteine pairs are disulfide-bonded: Cys46-Cys97, Cys140-Cys199, Cys252-Cys305, and Cys349-Cys395. Asn283 is a glycosylation site (N-linked (GlcNAc...) asparagine).

The protein belongs to the hemolin family. Hemolymph.

The protein localises to the secreted. It is found in the extracellular space. Functionally, insect-immune protein. Forms a protein complex at the bacterial surface. Can inhibit hemocyte aggregation. The protein is Hemolin of Hyalophora cecropia (Cecropia moth).